A 234-amino-acid polypeptide reads, in one-letter code: UPF0502 protein Bphyt_5265 (234 aa).

Belongs to the UPF0502 family.

This is UPF0502 protein Bphyt_5265 from Paraburkholderia phytofirmans (strain DSM 17436 / LMG 22146 / PsJN) (Burkholderia phytofirmans).